A 325-amino-acid chain; its full sequence is Elongation factor P--(R)-beta-lysine ligase (325 aa).

76–78 (SPE) contacts substrate. ATP contacts are provided by residues 100–102 (RNE) and N109. Y118 provides a ligand contact to substrate. Residue 244–245 (EL) coordinates ATP. Residue E251 coordinates substrate. G300 is a binding site for ATP.

Belongs to the class-II aminoacyl-tRNA synthetase family. EpmA subfamily. As to quaternary structure, homodimer.

The catalysed reaction is D-beta-lysine + L-lysyl-[protein] + ATP = N(6)-((3R)-3,6-diaminohexanoyl)-L-lysyl-[protein] + AMP + diphosphate + H(+). In terms of biological role, with EpmB is involved in the beta-lysylation step of the post-translational modification of translation elongation factor P (EF-P) on 'Lys-34'. Catalyzes the ATP-dependent activation of (R)-beta-lysine produced by EpmB, forming a lysyl-adenylate, from which the beta-lysyl moiety is then transferred to the epsilon-amino group of EF-P 'Lys-34'. The sequence is that of Elongation factor P--(R)-beta-lysine ligase from Salmonella dublin (strain CT_02021853).